Consider the following 92-residue polypeptide: Small ribosomal subunit protein bS18 (92 aa).

Belongs to the bacterial ribosomal protein bS18 family. Part of the 30S ribosomal subunit. Forms a tight heterodimer with protein bS6.

In terms of biological role, binds as a heterodimer with protein bS6 to the central domain of the 16S rRNA, where it helps stabilize the platform of the 30S subunit. In Cupriavidus necator (strain ATCC 17699 / DSM 428 / KCTC 22496 / NCIMB 10442 / H16 / Stanier 337) (Ralstonia eutropha), this protein is Small ribosomal subunit protein bS18.